The chain runs to 273 residues: Alcohol dehydrogenase-related 31 kDa protein (273 aa).

NAD(+) is bound at residue 11–34 (YVADCGGIALETCKVLMTKNIAKL). S139 contributes to the substrate binding site. Y152 functions as the Proton acceptor in the catalytic mechanism.

It belongs to the short-chain dehydrogenases/reductases (SDR) family.

The polypeptide is Alcohol dehydrogenase-related 31 kDa protein (Adhr) (Drosophila immigrans (Fruit fly)).